Reading from the N-terminus, the 122-residue chain is Small ribosomal subunit protein bS6 (122 aa).

A disordered region spans residues 99-122 (PSPMMKEVAREEAKKAAAQTEQAA).

It belongs to the bacterial ribosomal protein bS6 family.

In terms of biological role, binds together with bS18 to 16S ribosomal RNA. This chain is Small ribosomal subunit protein bS6, found in Ralstonia pickettii (strain 12J).